Reading from the N-terminus, the 409-residue chain is Aspartic protease pepA (409 aa).

The signal sequence occupies residues 1 to 19; the sequence is MPSIVSLTAALTFVGAVIA. A propeptide spans 20-65 (activation peptide); that stretch reads SPVEKRSAFSVEQVPHTTYLKNGPAQKVKTLRKYGKPVPQSLLDAA. In terms of domain architecture, Peptidase A1 spans 97–404; the sequence is YLSPVTVGST…PDSPPRIGLA (308 aa). Residues Asp113 and Asp293 contribute to the active site. A disulfide bridge links Cys329 with Cys364. A glycan (N-linked (GlcNAc...) asparagine) is linked at Asn335.

Belongs to the peptidase A1 family. As to quaternary structure, monomer.

The protein localises to the secreted. In terms of biological role, secreted aspartic endopeptidase that allows assimilation of proteinaceous substrates. The scissile peptide bond is attacked by a nucleophilic water molecule activated by two aspartic residues in the active site. Shows a broad primary substrate specificity. Favors hydrophobic residues at the P1 and P1' positions. This is Aspartic protease pepA from Leptosphaeria maculans (strain JN3 / isolate v23.1.3 / race Av1-4-5-6-7-8) (Blackleg fungus).